A 359-amino-acid polypeptide reads, in one-letter code: Peptide chain release factor 1 (359 aa).

An N5-methylglutamine modification is found at Gln235.

The protein belongs to the prokaryotic/mitochondrial release factor family. In terms of processing, methylated by PrmC. Methylation increases the termination efficiency of RF1.

It localises to the cytoplasm. Functionally, peptide chain release factor 1 directs the termination of translation in response to the peptide chain termination codons UAG and UAA. In Anaplasma phagocytophilum (strain HZ), this protein is Peptide chain release factor 1.